A 536-amino-acid chain; its full sequence is Caspase recruitment domain-containing protein 9 (536 aa).

The residue at position 2 (Ser2) is a Phosphoserine. Residues Asp3, Cys10, and His73 each coordinate Zn(2+). In terms of domain architecture, CARD spans 6–98 (NDDECWSALE…QLYRKVTGKE (93 aa)). A linker region spans residues 99-116 (PARVFSMIIDASGESGLT). Coiled coils occupy residues 117-277 (QLLM…HRNS) and 303-420 (SLRK…QLDM). A Glycyl lysine isopeptide (Lys-Gly) (interchain with G-Cter in ubiquitin) cross-link involves residue Lys125. Thr231 is subject to Phosphothreonine. Ser277 bears the Phosphoserine mark. Phosphoserine is present on residues Ser424, Ser425, Ser431, Ser451, Ser461, Ser483, and Ser498. The tract at residues 425-451 (SDLEDSSPRNSQELSLPQDLEEDAQLS) is disordered. A disordered region spans residues 472–536 (KHLSQTHDTV…GSDNTDTEGS (65 aa)). Basic and acidic residues predominate over residues 487–502 (PPEKERRRLKESFENY). Phosphothreonine; by CK2 is present on residues Thr531 and Thr533.

As to quaternary structure, monomer. Homodimer; homodimerization is mediated by the CARD domain which forms an extensive interaction with the adjacent linker and coiled-coil regions; leads to an autoinhibited state. Homomultimer; polymerizes following activation, forming a nucleating helical template that seeds BCL10-filament formation via a CARD-CARD interaction. Interacts (via CARD domain) with BCL10 (via CARD domain); interaction takes place following CARD9 activation and polymerization, leading to the formation of a filamentous CBM complex assembly. Component of a CBM complex (CARD9-BCL10, MALT1), composed of CARD9, BCL10 and MALT1. Interacts with RASGRF1. Interacts with NOD2 (via NACHT domain); interaction is direct. Interacts with RIPK2. Interacts with VHL; without leading to protein degradation. Post-translationally, phosphorylated at Thr-231 by PRKCD downstream of C-type lectin receptors activation: phosphorylation promotes interaction with BCL10, followed by activation of NF-kappa-B and MAP kinase p38 pathways. Phosphorylated at Thr-531 and Thr-533 by CK2 following interaction with VHL, leading to inhibit the ability to activate NF-kappa-B. Ubiquitinated at Lys-125 via 'Lys-27'-linked ubiquitin by TRIM62 downstream of C-type lectin receptors activation; leading to CARD9 activation, followed by activation of NF-kappa-B and MAP kinase p38 pathways. Deubiquitinated at Lys-125 by USP15, inhibiting CARD9.

Its subcellular location is the cytoplasm. Maintained in an autoinhibited state via homodimerization in which the CARD domain forms an extensive interaction with the adjacent linker and coiled-coil regions. Activation downstream of C-type lectin receptors, by phosphorylation by PRKCD and/or ubiquitination by TRIM62, triggers disruption of the CARD domain-coiled coil interface, CARD9 homooligomerization and BCL10 recruitment, followed by activation of NF-kappa-B and MAP kinase p38 pathways. Zinc-binding inhibits activation by stabilizing the CARD ground-state conformation and restricting its capacity to form BCL10-nucleating filaments. Its function is as follows. Adapter protein that plays a key role in innate immune response against fungi by forming signaling complexes downstream of C-type lectin receptors. CARD9-mediated signals are essential for antifungal immunity against a subset of fungi from the phylum Ascomycota. Transduces signals in myeloid cells downstream of C-type lectin receptors CLEC7A (dectin-1), CLEC6A (dectin-2) and CLEC4E (Mincle), which detect pathogen-associated molecular pattern metabolites (PAMPs), such as fungal carbohydrates, and trigger CARD9 activation. Upon activation, CARD9 homooligomerizes to form a nucleating helical template that recruits BCL10 via CARD-CARD interaction, thereby promoting polymerization of BCL10 and subsequent recruitment of MALT1: this leads to activation of NF-kappa-B and MAP kinase p38 (MAPK11, MAPK12, MAPK13 and/or MAPK14) pathways which stimulate expression of genes encoding pro-inflammatory cytokines and chemokines. CARD9 signaling in antigen-presenting cells links innate sensing of fungi to the activation of adaptive immunity and provides a cytokine milieu that induces the development and subsequent of interleukin 17-producing T helper (Th17) cells. Also involved in activation of myeloid cells via classical ITAM-associated receptors and TLR: required for TLR-mediated activation of MAPK, while it is not required for TLR-induced activation of NF-kappa-B. CARD9 can also be engaged independently of BCL10: forms a complex with RASGRF1 downstream of C-type lectin receptors, which recruits and activates HRAS, leading to ERK activation and the production of cytokines. Acts as an important regulator of the intestinal commensal fungi (mycobiota) component of the gut microbiota. Plays an essential role in antifungal immunity against dissemination of gut fungi: acts by promoting induction of antifungal IgG antibodies response in CX3CR1(+) macrophages to confer protection against disseminated C.albicans or C.auris infection. Also mediates immunity against other pathogens, such as certain bacteria, viruses and parasites; CARD9 signaling is however redundant with other innate immune responses. In response to L.monocytogenes infection, required for the production of inflammatory cytokines activated by intracellular peptidoglycan: acts by connecting NOD2 recognition of peptidoglycan to downstream activation of MAP kinases (MAPK) without activating NF-kappa-B. This is Caspase recruitment domain-containing protein 9 from Rattus norvegicus (Rat).